A 158-amino-acid polypeptide reads, in one-letter code: MANKVAQEISTLIEPLINAQQLLLWDVSYTKEGGQKVLRILIDKRNHEFITMDDITTFTQAVNELLDTIEPDPIPEAYMLDISSPGADRPLIRPWHYEWAKASGENILVAFFVAKNGQKKWQGKIETIDDKGITLTTSSETIVCTFDEIAKAVLDTQF.

It belongs to the RimP family.

It localises to the cytoplasm. In terms of biological role, required for maturation of 30S ribosomal subunits. The chain is Ribosome maturation factor RimP from Leuconostoc citreum (strain KM20).